A 202-amino-acid chain; its full sequence is Putative 3-methyladenine DNA glycosylase (202 aa).

The protein belongs to the DNA glycosylase MPG family.

This Staphylococcus aureus (strain MRSA252) protein is Putative 3-methyladenine DNA glycosylase.